The following is a 121-amino-acid chain: MARIAGINIPPQQHAEIGLTAIFGVGRTRARKICEAAGVPVTKKVKDLTDAELERIREHLGVFTVEGDLRREVQLSIKRLIDLGTYRGMRHKRGLPVRGQRTRTNARTRKGPRRAAASLKK.

The tract at residues His91 to Lys121 is disordered.

It belongs to the universal ribosomal protein uS13 family. Part of the 30S ribosomal subunit. Forms a loose heterodimer with protein S19. Forms two bridges to the 50S subunit in the 70S ribosome.

In terms of biological role, located at the top of the head of the 30S subunit, it contacts several helices of the 16S rRNA. In the 70S ribosome it contacts the 23S rRNA (bridge B1a) and protein L5 of the 50S subunit (bridge B1b), connecting the 2 subunits; these bridges are implicated in subunit movement. Contacts the tRNAs in the A and P-sites. The polypeptide is Small ribosomal subunit protein uS13 (Bordetella avium (strain 197N)).